The chain runs to 392 residues: Hercynylcysteine sulfoxide lyase (392 aa).

Residue K219 is modified to N6-(pyridoxal phosphate)lysine.

This sequence belongs to the class-V pyridoxal-phosphate-dependent aminotransferase family. EgtE subfamily. Pyridoxal 5'-phosphate is required as a cofactor.

Its subcellular location is the cytoplasm. The protein localises to the nucleus. It catalyses the reaction S-(hercyn-2-yl)-L-cysteine S-oxide + AH2 + H(+) = ergothioneine + pyruvate + A + NH4(+). It participates in amino-acid biosynthesis; ergothioneine biosynthesis. In terms of biological role, catalyzes the conversion of hercynylcysteine sulfoxide to ergothioneine by cleaving the cysteine residue at the sulfur atom, the last step in the biosynthesis pathway of ergothioneine. The protein is Hercynylcysteine sulfoxide lyase of Schizosaccharomyces pombe (strain 972 / ATCC 24843) (Fission yeast).